The chain runs to 1072 residues: Guanylyl cyclase C (1072 aa).

The signal sequence occupies residues Met1–Ala22. Over Ser23–Gln429 the chain is Extracellular. 7 N-linked (GlcNAc...) asparagine glycosylation sites follow: Asn31, Asn74, Asn78, Asn187, Asn194, Asn306, and Asn401. Residues Ile430–Leu453 traverse the membrane as a helical segment. The Cytoplasmic segment spans residues Arg454 to Phe1072. Positions Leu488 to Phe748 constitute a Protein kinase domain. The Guanylate cyclase domain maps to Thr823 to Glu953.

This sequence belongs to the adenylyl cyclase class-4/guanylyl cyclase family. Homotrimer. Interacts via its C-terminal region with PDZK2. Interacts with the lectin chaperone VIP36. Post-translationally, glycosylation at Asn-74 and/or Asn-78 is required for interaction with VIP36 while glycosylation at Asn-401 modulates ligand-mediated GC-C activation.

It is found in the cell membrane. The protein localises to the endoplasmic reticulum membrane. The catalysed reaction is GTP = 3',5'-cyclic GMP + diphosphate. Functionally, guanylyl cyclase that catalyzes synthesis of cyclic GMP (cGMP) from GTP. Receptor for the E.coli heat-stable enterotoxin; E.coli enterotoxin markedly stimulates the accumulation of cGMP in mammalian cells expressing GUCY2C. In Rattus norvegicus (Rat), this protein is Guanylyl cyclase C (Gucy2c).